The chain runs to 350 residues: MLEEALAAIQNARDLEELKALKARYLGKKGLLTQEMKGLSALPLEERRKRGQELNAIKAALEAALEAREKALEEAALKEALERERVDVSLPGASLFSGGLHPITLMERELVEIFRALGYQAVEGPEVESEFFNFDALNIPEHHPARDMWDTFWLTGEGFRLEGPLGEEVEGRLLLRTHTSPMQVRYMVAHTPPFRIVVPGRVFRFEQTDATHEAVFHQLEGLVVGEGIAMAHLKGAIYELAQALFGPDSKVRFQPVYFPFVEPGAQFAVWWPEGGKWLELGGAGMVHPKVFQAVDAYRERLGLPPAYRGVTGFAFGLGVERLAMLRYGIPDIRYFFGGRLKFLEQFKGVL.

Position 262 (glutamate 262) interacts with Mg(2+).

It belongs to the class-II aminoacyl-tRNA synthetase family. Phe-tRNA synthetase alpha subunit type 1 subfamily. Tetramer of two alpha and two beta subunits. Mg(2+) is required as a cofactor.

It localises to the cytoplasm. The enzyme catalyses tRNA(Phe) + L-phenylalanine + ATP = L-phenylalanyl-tRNA(Phe) + AMP + diphosphate + H(+). The chain is Phenylalanine--tRNA ligase alpha subunit (pheS) from Thermus thermophilus (strain ATCC 27634 / DSM 579 / HB8).